A 319-amino-acid polypeptide reads, in one-letter code: Beta-xylosidase (319 aa).

Asp-14 serves as the catalytic Proton acceptor. The active-site Proton donor is the Glu-222.

It belongs to the glycosyl hydrolase 43 family.

The catalysed reaction is Hydrolysis of (1-&gt;4)-beta-D-xylans, to remove successive D-xylose residues from the non-reducing termini.. Exoxylanase capable of acting on certain xylans and xylooligosaccharides. The polypeptide is Beta-xylosidase (xynB) (Xylanibacter ruminicola (Prevotella ruminicola)).